The chain runs to 710 residues: Early transcription factor 82 kDa subunit (710 aa).

It belongs to the poxviridae VETF large subunit family. Heterodimer of a 70 kDa and a 82 kDa subunit. Part of the early transcription complex composed of ETF, RAP94/OPG109, and the DNA-directed RNA polymerase.

The protein resides in the virion. Functionally, acts with RNA polymerase to initiate transcription from early gene promoters. Is recruited by the RPO-associated protein of 94 kDa RAP94/OPG109 to form the early transcription complex, which also contains the core RNA polymerase. ETF heterodimer binds to early gene promoters. The protein is Early transcription factor 82 kDa subunit (OPG133) of Homo sapiens (Human).